The chain runs to 164 residues: NAD(P)H-quinone oxidoreductase subunit I, chloroplastic (164 aa).

4Fe-4S ferredoxin-type domains are found at residues 55-84 and 95-124; these read GRIH…VDWK and LNYS…MTEE. 8 residues coordinate [4Fe-4S] cluster: Cys64, Cys67, Cys70, Cys74, Cys104, Cys107, Cys110, and Cys114.

It belongs to the complex I 23 kDa subunit family. In terms of assembly, NDH is composed of at least 16 different subunits, 5 of which are encoded in the nucleus. [4Fe-4S] cluster serves as cofactor.

It localises to the plastid. Its subcellular location is the chloroplast thylakoid membrane. It carries out the reaction a plastoquinone + NADH + (n+1) H(+)(in) = a plastoquinol + NAD(+) + n H(+)(out). The enzyme catalyses a plastoquinone + NADPH + (n+1) H(+)(in) = a plastoquinol + NADP(+) + n H(+)(out). Its function is as follows. NDH shuttles electrons from NAD(P)H:plastoquinone, via FMN and iron-sulfur (Fe-S) centers, to quinones in the photosynthetic chain and possibly in a chloroplast respiratory chain. The immediate electron acceptor for the enzyme in this species is believed to be plastoquinone. Couples the redox reaction to proton translocation, and thus conserves the redox energy in a proton gradient. In Daucus carota (Wild carrot), this protein is NAD(P)H-quinone oxidoreductase subunit I, chloroplastic.